Reading from the N-terminus, the 124-residue chain is Galanin peptides (124 aa).

The signal sequence occupies residues 1–19; it reads MARGSVILLAWLLLVATLS. Positions 20 to 30 are excised as a propeptide; the sequence is ATLGLGMPTKE. Residue threonine 61 is modified to Threonine amide. A phosphoserine mark is found at serine 117 and serine 118.

Belongs to the galanin family.

It is found in the secreted. Endocrine hormone of the central and peripheral nervous systems that binds and activates the G protein-coupled receptors GALR1, GALR2, and GALR3. This small neuropeptide may regulate diverse physiologic functions including contraction of smooth muscle of the gastrointestinal and genitourinary tract, growth hormone and insulin release and adrenal secretion. This Rattus norvegicus (Rat) protein is Galanin peptides (Gal).